We begin with the raw amino-acid sequence, 72 residues long: Translation initiation factor IF-1 (72 aa).

An S1-like domain is found at 1 to 72; sequence MTKEENIEMQ…SKGRIIFRSR (72 aa).

Belongs to the IF-1 family. As to quaternary structure, component of the 30S ribosomal translation pre-initiation complex which assembles on the 30S ribosome in the order IF-2 and IF-3, IF-1 and N-formylmethionyl-tRNA(fMet); mRNA recruitment can occur at any time during PIC assembly.

It is found in the cytoplasm. Functionally, one of the essential components for the initiation of protein synthesis. Stabilizes the binding of IF-2 and IF-3 on the 30S subunit to which N-formylmethionyl-tRNA(fMet) subsequently binds. Helps modulate mRNA selection, yielding the 30S pre-initiation complex (PIC). Upon addition of the 50S ribosomal subunit IF-1, IF-2 and IF-3 are released leaving the mature 70S translation initiation complex. This chain is Translation initiation factor IF-1, found in Wigglesworthia glossinidia brevipalpis.